We begin with the raw amino-acid sequence, 239 residues long: 3-dehydroquinate dehydratase (239 aa).

3-dehydroquinate is bound by residues 35 to 37 (ELR) and Arg-70. The active-site Proton donor/acceptor is the His-133. Residue Lys-160 is the Schiff-base intermediate with substrate of the active site. Positions 202 and 225 each coordinate 3-dehydroquinate.

It belongs to the type-I 3-dehydroquinase family. As to quaternary structure, homodimer.

It carries out the reaction 3-dehydroquinate = 3-dehydroshikimate + H2O. Its pathway is metabolic intermediate biosynthesis; chorismate biosynthesis; chorismate from D-erythrose 4-phosphate and phosphoenolpyruvate: step 3/7. In terms of biological role, involved in the third step of the chorismate pathway, which leads to the biosynthesis of aromatic amino acids. Catalyzes the cis-dehydration of 3-dehydroquinate (DHQ) and introduces the first double bond of the aromatic ring to yield 3-dehydroshikimate. The protein is 3-dehydroquinate dehydratase of Staphylococcus saprophyticus subsp. saprophyticus (strain ATCC 15305 / DSM 20229 / NCIMB 8711 / NCTC 7292 / S-41).